The sequence spans 841 residues: Rhomboid-like protease 5 (841 aa).

The segment covering 1-10 (MSSKGGSSRL) has biased composition (low complexity). The tract at residues 1–289 (MSSKGGSSRL…GGDGGPRRHS (289 aa)) is disordered. Basic and acidic residues predominate over residues 11-51 (GSKDLKKMTSRTERELRDSGRVRGEVERVEKRLRATAKVKE). Residues 95 to 132 (LRPASSSPRLASSSRPTESTLPSSSSRALQGASSSSSS) are compositionally biased toward low complexity. 3 stretches are compositionally biased toward basic and acidic residues: residues 154–163 (LRQEKKRLPE), 209–230 (RTAEKLEEGTASHRDGSRRGSV), and 243–275 (SSHEFESSPQREERMQPQETGRRELSSEPRSGD). Transmembrane regions (helical) follow at residues 323 to 343 (FLMIFLTSSVLFFVFLQELVL), 464 to 484 (MFRVVWGMFLHGGWMHLLLNV), 492 to 512 (WILEPAWGFLRTLSLWIVGGV), 526 to 546 (VTVGSSGAFYGLLGALVPFSI), 571 to 590 (FGNMVGVQGVDNNAHLGGLI), and 673 to 693 (FAAAVGLVTFWSVLWLYLLVP). The active-site Nucleophile is the serine 531. The active site involves histidine 585.

This sequence belongs to the peptidase S54 family.

It localises to the membrane. The catalysed reaction is Cleaves type-1 transmembrane domains using a catalytic dyad composed of serine and histidine that are contributed by different transmembrane domains.. In terms of biological role, serine protease involved in intramembrane proteolysis. Cleaves microneme adhesins, such as MIC2. This step is essential for efficient invasion of host cells. Catalyzes intramembrane proteolysis of AMA1. This Toxoplasma gondii protein is Rhomboid-like protease 5 (ROM5).